A 193-amino-acid polypeptide reads, in one-letter code: Dual-action ribosomal maturation protein DarP (193 aa).

Basic and acidic residues predominate over residues 1–10; that stretch reads MRGRDEETGE. Disordered stretches follow at residues 1-20 and 171-193; these read MRGRDEETGEFRGASRSQQR and QEQGLESGDSELEDGESASEDDE. Residues 178-193 show a composition bias toward acidic residues; that stretch reads GDSELEDGESASEDDE.

It belongs to the DarP family.

It localises to the cytoplasm. In terms of biological role, member of a network of 50S ribosomal subunit biogenesis factors which assembles along the 30S-50S interface, preventing incorrect 23S rRNA structures from forming. Promotes peptidyl transferase center (PTC) maturation. The chain is Dual-action ribosomal maturation protein DarP from Xanthomonas axonopodis pv. citri (strain 306).